The primary structure comprises 467 residues: Transcription factor CRF1 (467 aa).

A compositionally biased stretch (polar residues) spans 1 to 10; the sequence is MLLSAPVNST. 4 disordered regions span residues 1–42, 62–110, 151–170, and 341–361; these read MLLS…VVLS, DFES…SSKT, SKSE…TNED, and TYRD…DRKR. Positions 11–23 are enriched in basic residues; that stretch reads VRRKPHSPNKKKP. Residues 28 to 42 are compositionally biased toward low complexity; sequence TAASFSSSSSTVVLS. Positions 89 to 102 are enriched in basic and acidic residues; that stretch reads YSREENTNEVEEKT.

Interacts with FHL1 to form a repressor complex. The formation of the CRF1-FHL1 complex is inhibited by the TOR pathway. In terms of processing, phosphorylated by CDC28 and YAK1.

Its subcellular location is the cytoplasm. The protein resides in the nucleus. Functionally, transcription factor, corepressor with FHL1 of ribosomal protein genes. May be involved in the blocking of the spread of silencing. This is Transcription factor CRF1 (CRF1) from Saccharomyces cerevisiae (strain ATCC 204508 / S288c) (Baker's yeast).